Consider the following 42-residue polypeptide: Photosystem I reaction center subunit IX (42 aa).

Residues 7-27 (YLSTAPVLAALSLGFLAGLLI) traverse the membrane as a helical segment.

This sequence belongs to the PsaJ family.

The protein resides in the plastid. It is found in the chloroplast thylakoid membrane. In terms of biological role, may help in the organization of the PsaE and PsaF subunits. The protein is Photosystem I reaction center subunit IX of Cryptomeria japonica (Japanese cedar).